Consider the following 223-residue polypeptide: Serum amyloid P-component (223 aa).

Residues 1–19 form the signal peptide; that stretch reads MDKMLFWVSVFTIFLDVFA. Positions 24 to 223 constitute a Pentraxin (PTX) domain; the sequence is DKKVFVFPRE…YVIIKPRVWD (200 aa). Cys55 and Cys114 are disulfide-bonded. Residues Asp77, Asn78, Glu155, Gln156, Asp157, and Gln167 each contribute to the Ca(2+) site. N-linked (GlcNAc...) asparagine glycosylation occurs at Asn198.

This sequence belongs to the pentraxin family. As to quaternary structure, homopentamer. Pentraxin (or pentaxin) have a discoid arrangement of 5 non-covalently bound subunits. The cofactor is Ca(2+).

The protein resides in the secreted. This is Serum amyloid P-component (PTX2) from Cavia porcellus (Guinea pig).